The following is a 194-amino-acid chain: Probable DNA-directed RNA polymerase subunit delta (194 aa).

The HTH HARE-type domain maps to 14–83 (LSMIEVARAI…GENKWGLRSW (70 aa)). The segment at 117–194 (GDEDAIDYSD…SDDEEDEEGE (78 aa)) is disordered.

This sequence belongs to the RpoE family. RNAP is composed of a core of 2 alpha, a beta and a beta' subunits. The core is associated with a delta subunit and one of several sigma factors.

Participates in both the initiation and recycling phases of transcription. In the presence of the delta subunit, RNAP displays an increased specificity of transcription, a decreased affinity for nucleic acids, and an increased efficiency of RNA synthesis because of enhanced recycling. The sequence is that of Probable DNA-directed RNA polymerase subunit delta from Streptococcus mutans serotype c (strain ATCC 700610 / UA159).